The following is a 155-amino-acid chain: Small ribosomal subunit protein uS7cz/uS7cy (155 aa).

Belongs to the universal ribosomal protein uS7 family. As to quaternary structure, part of the 30S ribosomal subunit.

The protein resides in the plastid. It is found in the chloroplast. In terms of biological role, one of the primary rRNA binding proteins, it binds directly to 16S rRNA where it nucleates assembly of the head domain of the 30S subunit. The chain is Small ribosomal subunit protein uS7cz/uS7cy (rps7-A) from Phaseolus vulgaris (Kidney bean).